We begin with the raw amino-acid sequence, 895 residues long: Androgen receptor (895 aa).

Residues 1–533 are modulating; the sequence is MEVQLGLGRV…PIDYYFPPQK (533 aa). Residues 1–562 are interaction with ZNF318; sequence MEVQLGLGRV…GSCKVFFKRA (562 aa). Disordered stretches follow at residues 33 to 155 and 175 to 211; these read VIQN…PTFP and QLLQQQQQEAVSEGSSSGRAREASGAPTSSKDNYLGG. Low complexity-rich tracts occupy residues 44–81 and 175–200; these read AASAAPPGASLQQQQQQQQQETSPRQQQQQQGEDGSPQ and QLLQQQQQEAVSEGSSSGRAREASGA. Ser-66 carries the post-translational modification Phosphoserine; by CDK9. Residue Ser-79 is modified to Phosphoserine. Over residues 201-211 the composition is skewed to polar residues; the sequence is PTSSKDNYLGG. Tyr-208 is subject to Phosphotyrosine; by CSK. Ser-241 carries the post-translational modification Phosphoserine. Tyr-252 carries the post-translational modification Phosphotyrosine; by CSK and TNK2. Residues Tyr-292, Tyr-331, Tyr-342, and Tyr-347 each carry the phosphotyrosine; by CSK modification. Position 348 is a phosphotyrosine; by CSK and TNK2 (Tyr-348). A Glycyl lysine isopeptide (Lys-Gly) (interchain with G-Cter in SUMO) cross-link involves residue Lys-371. A Phosphotyrosine; by CSK modification is found at Tyr-378. A Glycyl lysine isopeptide (Lys-Gly) (interchain with G-Cter in SUMO) cross-link involves residue Lys-496. Tyr-510 and Tyr-527 each carry phosphotyrosine; by CSK. The interaction with LPXN stretch occupies residues 527-894; the sequence is YYFPPQKTCL…GKVKPIYFHT (368 aa). The nuclear receptor DNA-binding region spans 534–607; that stretch reads TCLICGDEAS…AGMTLGARKL (74 aa). 2 consecutive NR C4-type zinc fingers follow at residues 535–555 and 571–595; these read CLICGDEASGCHYGALTCGSC and CASRNDCTIDKFRRKNCPSCRLRKC. Residues 547 to 637 are interaction with HIPK3; sequence YGALTCGSCK…TEETAQKLTV (91 aa). The interaction with CCAR1 stretch occupies residues 567–894; sequence QKYLCASRND…GKVKPIYFHT (328 aa). The interaction with KAT7 stretch occupies residues 600–894; sequence MTLGARKLKK…GKVKPIYFHT (295 aa). Ser-626 carries the post-translational modification Phosphoserine; by STK4/MST1. The 232-residue stretch at 644–875 folds into the NR LBD domain; that stretch reads ECQPIFLNVL…DFPEMMAEII (232 aa). 17beta-hydroxy-5alpha-androstan-3-one contacts are provided by Asn-681 and Arg-728. Residues Lys-821 and Lys-823 each participate in a glycyl lysine isopeptide (Lys-Gly) (interchain with G-Cter in ubiquitin) cross-link. Residue Thr-853 participates in 17beta-hydroxy-5alpha-androstan-3-one binding. Tyr-891 bears the Phosphotyrosine; by CSK mark.

This sequence belongs to the nuclear hormone receptor family. NR3 subfamily. In terms of assembly, binds DNA as a homodimer. Part of a ternary complex containing AR, EFCAB6/DJBP and PARK7. Interacts with HIPK3 and NR0B2 in the presence of androgen. The ligand binding domain interacts with KAT7/HBO1 in the presence of dihydrotestosterone. Interacts with EFCAB6/DJBP, PQBP1, RANBP9, RBAK, SPDEF, SRA1, TGFB1I1 and RREB1. Interacts with ZMIZ1/ZIMP10 and ZMIZ2/ZMIP7 which both enhance its transactivation activity. Interacts with SLC30A9 and RAD54L2/ARIP4. Interacts with MACROD1 (via macro domain). Interacts via the ligand-binding domain with LXXLL and FXXLF motifs from NCOA1, NCOA2, NCOA3 and MAGEA11. Interacts (via nuclear receptor DNA binding domain and nuclear receptor ligand binding domain) with NCOA4. The AR N-terminal poly-Gln region binds Ran resulting in enhancement of AR-mediated transactivation. Ran-binding decreases as the poly-Gln length increases. Interacts with HIP1 (via coiled coil domain). Interacts (via ligand-binding domain) with TRIM68. Interacts with TNK2. Interacts with USP26. Interacts with RNF6. Interacts (regulated by RNF6 probably through polyubiquitination) with RNF14; regulates AR transcriptional activity. Interacts with PRMT2 and TRIM24. Interacts with RACK1. Interacts with RANBP10; this interaction enhances dihydrotestosterone-induced AR transcriptional activity. Interacts with PRPF6 in a hormone-independent way; this interaction enhances dihydrotestosterone-induced AR transcriptional activity. Interacts with STK4/MST1. Interacts with ZIPK/DAPK3. Interacts with LPXN. Interacts with MAK. Part of a complex containing AR, MAK and NCOA3. Interacts with CRY1. Interacts with CCAR1 and GATA2. Interacts with ZNF318. Interacts with BUD31. Interacts with ARID4A. Interacts with ARID4B. Interacts (via NR LBD domain) with ZBTB7A; the interaction is direct and androgen-dependent. Interacts with NCOR1. Interacts with NCOR2. Interacts with CRY2 in a ligand-dependent manner. In terms of processing, phosphorylated in prostate cancer cells in response to several growth factors including EGF. Phosphorylation is induced by c-Src kinase (CSK). Tyr-510 is one of the major phosphorylation sites and an increase in phosphorylation and Src kinase activity is associated with prostate cancer progression. Phosphorylation by TNK2 enhances the DNA-binding and transcriptional activity. Phosphorylation at Ser-66 by CDK9 regulates AR promoter selectivity and cell growth. Post-translationally, sumoylated on Lys-371 (major) and Lys-496. Ubiquitinated. Deubiquitinated by USP26. 'Lys-6' and 'Lys-27'-linked polyubiquitination by RNF6 modulates AR transcriptional activity and specificity. Palmitoylated by ZDHHC7 and ZDHHC21. Palmitoylation is required for plasma membrane targeting and for rapid intracellular signaling via ERK and AKT kinases and cAMP generation.

The protein resides in the nucleus. The protein localises to the cytoplasm. Functionally, steroid hormone receptors are ligand-activated transcription factors that regulate eukaryotic gene expression and affect cellular proliferation and differentiation in target tissues. Transcription factor activity is modulated by bound coactivator and corepressor proteins like ZBTB7A that recruits NCOR1 and NCOR2 to the androgen response elements/ARE on target genes, negatively regulating androgen receptor signaling and androgen-induced cell proliferation. Transcription activation is also down-regulated by NR0B2. Activated, but not phosphorylated, by HIPK3 and ZIPK/DAPK3. This chain is Androgen receptor (AR), found in Papio hamadryas (Hamadryas baboon).